The primary structure comprises 312 residues: tRNA (adenine(58)-N(1))-methyltransferase catalytic subunit trmt61a (312 aa).

S-adenosyl-L-methionine-binding positions include Leu85, 112–114 (SGS), Glu133, Arg138, 161–162 (DA), and Asp183.

The protein belongs to the class I-like SAM-binding methyltransferase superfamily. TRM61 family. In terms of assembly, heterotetramer; composed of two copies of trmt6 and two copies of trmt61a.

The protein localises to the nucleus. The catalysed reaction is adenosine(58) in tRNA + S-adenosyl-L-methionine = N(1)-methyladenosine(58) in tRNA + S-adenosyl-L-homocysteine + H(+). Inhibited by calcium and magnesium ions and spermidine. Enhanced by KCl, NaCl and NH(4)Cl in concentrations from 0.1-0.25 M. Concentrations of more than 0.3 M are inhibitory. In terms of biological role, catalytic subunit of tRNA (adenine-N(1)-)-methyltransferase, which catalyzes the formation of N(1)-methyladenine at position 58 (m1A58) in initiator methionyl-tRNA. This is tRNA (adenine(58)-N(1))-methyltransferase catalytic subunit trmt61a (trmt61a) from Dictyostelium discoideum (Social amoeba).